Consider the following 903-residue polypeptide: Dual serine/threonine and tyrosine protein kinase (903 aa).

Positions A382–T414 form a coiled coil. A Protein kinase domain is found at P627–L881. ATP contacts are provided by residues L633–V641 and K656. The Proton acceptor role is filled by D752.

Belongs to the protein kinase superfamily. Ser/Thr protein kinase family.

It is found in the cytoplasm. It localises to the cell membrane. The protein resides in the apical cell membrane. Its subcellular location is the basolateral cell membrane. The protein localises to the cell junction. The catalysed reaction is L-seryl-[protein] + ATP = O-phospho-L-seryl-[protein] + ADP + H(+). It carries out the reaction L-threonyl-[protein] + ATP = O-phospho-L-threonyl-[protein] + ADP + H(+). The enzyme catalyses L-tyrosyl-[protein] + ATP = O-phospho-L-tyrosyl-[protein] + ADP + H(+). In terms of biological role, may act as a positive regulator of ERK phosphorylation downstream of fibroblast growth factor-receptor activation. May induce both caspase-dependent apoptosis and caspase-independent cell death. May play a role in the embryonic development. This Pimephales promelas (Fathead minnow) protein is Dual serine/threonine and tyrosine protein kinase.